Reading from the N-terminus, the 344-residue chain is tRNA N6-adenosine threonylcarbamoyltransferase (344 aa).

H111 and H115 together coordinate Fe cation. Substrate is bound by residues 133 to 137 (VVSGG), D166, G179, D183, and N270. D298 is a Fe cation binding site.

Belongs to the KAE1 / TsaD family. Fe(2+) is required as a cofactor.

The protein resides in the cytoplasm. The catalysed reaction is L-threonylcarbamoyladenylate + adenosine(37) in tRNA = N(6)-L-threonylcarbamoyladenosine(37) in tRNA + AMP + H(+). Functionally, required for the formation of a threonylcarbamoyl group on adenosine at position 37 (t(6)A37) in tRNAs that read codons beginning with adenine. Is involved in the transfer of the threonylcarbamoyl moiety of threonylcarbamoyl-AMP (TC-AMP) to the N6 group of A37, together with TsaE and TsaB. TsaD likely plays a direct catalytic role in this reaction. The chain is tRNA N6-adenosine threonylcarbamoyltransferase from Persephonella marina (strain DSM 14350 / EX-H1).